The primary structure comprises 668 residues: DNA ligase (668 aa).

Residues 37 to 41 (DNVYD), 86 to 87 (SM), and E116 each bind NAD(+). K118 functions as the N6-AMP-lysine intermediate in the catalytic mechanism. R139, E173, K288, and K312 together coordinate NAD(+). Zn(2+) is bound by residues C406, C409, C424, and C429. In terms of domain architecture, BRCT spans 591–668 (APDNPFKDKT…TEEEAIAQIE (78 aa)).

Belongs to the NAD-dependent DNA ligase family. LigA subfamily. It depends on Mg(2+) as a cofactor. The cofactor is Mn(2+).

It carries out the reaction NAD(+) + (deoxyribonucleotide)n-3'-hydroxyl + 5'-phospho-(deoxyribonucleotide)m = (deoxyribonucleotide)n+m + AMP + beta-nicotinamide D-nucleotide.. Functionally, DNA ligase that catalyzes the formation of phosphodiester linkages between 5'-phosphoryl and 3'-hydroxyl groups in double-stranded DNA using NAD as a coenzyme and as the energy source for the reaction. It is essential for DNA replication and repair of damaged DNA. The chain is DNA ligase from Lactobacillus helveticus (strain DPC 4571).